The primary structure comprises 232 residues: MDSDYSFSLTTFSPSGKLVQIEHALQAAASGGSAIGIKAKNGVVLITEKKLHSLVDVTSVQKISMITENIGLVYAGMGPDSRVLIKKARKESEKYYKQYKEKIPVLQLVRELASIMQEFTQSGGVRPFGVSLLVAGFDEKGPHLYQVDPSGSYFAWKATAIGKNMVSSKTFLEKRYSDDLEIEDAIQTALITIKEGFETQLTEFNMELAIIGKNQEFKILTPAQIKDYLLNL.

This sequence belongs to the peptidase T1A family. In terms of assembly, the 26S proteasome consists of a 20S proteasome core and two 19S regulatory subunits. The 20S proteasome core is composed of 28 subunits that are arranged in four stacked rings, resulting in a barrel-shaped structure. The two end rings are each formed by seven alpha subunits, and the two central rings are each formed by seven beta subunits. The catalytic chamber with the active sites is on the inside of the barrel.

The protein resides in the cytoplasm. It is found in the nucleus. Its function is as follows. The proteasome is a multicatalytic proteinase complex which is characterized by its ability to cleave peptides with Arg, Phe, Tyr, Leu, and Glu adjacent to the leaving group at neutral or slightly basic pH. The proteasome has an ATP-dependent proteolytic activity. This is Proteasome subunit alpha type-2 (psmA2) from Dictyostelium discoideum (Social amoeba).